The primary structure comprises 188 residues: Heterodisulfide reductase subunit C-like protein (188 aa).

4Fe-4S ferredoxin-type domains lie at 34–64 and 78–109; these read KELG…FEWY and DELL…FEVM. 8 residues coordinate [4Fe-4S] cluster: Cys44, Cys47, Cys50, Cys54, Cys89, Cys92, Cys95, and Cys99.

The protein belongs to the HdrC family. In terms of assembly, the heterodisulfide reductase is composed of three subunits; HdlA, HdlB and HdlC. It forms a complex with the F420-non-reducing hydrogenase (Mvh), which provides the reducing equivalents to the heterodisulfide reductase.

Its subcellular location is the cytoplasm. Functionally, has oxidoreductase activity. The Hdl and Mvh subunits may together mediate electron transfer from hydrogen to an unidentified electron acceptor on the cytoplasmic side of the membrane. The sequence is that of Heterodisulfide reductase subunit C-like protein (hdlC) from Archaeoglobus profundus (strain DSM 5631 / JCM 9629 / NBRC 100127 / Av18).